Here is a 488-residue protein sequence, read N- to C-terminus: Poly(3-hydroxybutyrate) depolymerase (488 aa).

Positions 1 to 27 are cleaved as a signal peptide; sequence MVRRLWRRIAGWLAACVAILCAFPLHA. Serine 166 acts as the Charge relay system in catalysis. The Fibronectin type-III domain maps to 346–428; sequence APTGLAVTAT…AAVSATTKSA (83 aa).

This sequence belongs to the AB hydrolase superfamily. Lipase family.

It is found in the secreted. The enzyme catalyses [(3R)-hydroxybutanoate](n) + H2O = [(3R)-hydroxybutanoate](n-2) + (3R)-hydroxybutanoate dimer + H(+). It carries out the reaction [(3R)-hydroxybutanoate](n) + H2O = [(3R)-hydroxybutanoate](n-3) + (3R)-hydroxybutanoate trimer + H(+). It catalyses the reaction [(3R)-hydroxybutanoate](n) + H2O = [(3R)-hydroxybutanoate](n-1) + (R)-3-hydroxybutanoate + H(+). The catalysed reaction is [(3R)-hydroxybutanoate](n) + H2O = [(3R)-hydroxybutanoate](n-5) + (3R)-hydroxybutanoate pentamer + H(+). The enzyme catalyses [(3R)-hydroxybutanoate](n) + H2O = [(3R)-hydroxybutanoate](n-4) + (3R)-hydroxybutanoate tetramer + H(+). Its function is as follows. This protein degrades water-insoluble and water-soluble PHB to monomeric D(-)-3-hydroxybutyrate. In Ralstonia pickettii (Burkholderia pickettii), this protein is Poly(3-hydroxybutyrate) depolymerase.